Reading from the N-terminus, the 266-residue chain is Na(+)-translocating NADH-quinone reductase subunit C (266 aa).

A helical membrane pass occupies residues 16 to 36 (LLVVVILCLVCSVVVAGAAVG). Threonine 232 is modified (FMN phosphoryl threonine).

The protein belongs to the NqrC family. In terms of assembly, composed of six subunits; NqrA, NqrB, NqrC, NqrD, NqrE and NqrF. It depends on FMN as a cofactor.

The protein resides in the cell inner membrane. The enzyme catalyses a ubiquinone + n Na(+)(in) + NADH + H(+) = a ubiquinol + n Na(+)(out) + NAD(+). NQR complex catalyzes the reduction of ubiquinone-1 to ubiquinol by two successive reactions, coupled with the transport of Na(+) ions from the cytoplasm to the periplasm. NqrA to NqrE are probably involved in the second step, the conversion of ubisemiquinone to ubiquinol. This is Na(+)-translocating NADH-quinone reductase subunit C from Yersinia pestis.